A 137-amino-acid chain; its full sequence is Neutral phospholipase A2 ammodytin I2 (137 aa).

An N-terminal signal peptide occupies residues 1 to 16 (MRTLWIVAVCLIGVEG). 7 disulfide bridges follow: cysteine 42–cysteine 131, cysteine 44–cysteine 60, cysteine 59–cysteine 111, cysteine 65–cysteine 137, cysteine 66–cysteine 104, cysteine 73–cysteine 97, and cysteine 91–cysteine 102. Tyrosine 43, glycine 45, and glycine 47 together coordinate Ca(2+). Residue histidine 63 is part of the active site. Aspartate 64 lines the Ca(2+) pocket. The active site involves aspartate 105.

This sequence belongs to the phospholipase A2 family. Group II subfamily. D49 sub-subfamily. The cofactor is Ca(2+). In terms of tissue distribution, expressed by the venom gland.

The protein resides in the secreted. The enzyme catalyses a 1,2-diacyl-sn-glycero-3-phosphocholine + H2O = a 1-acyl-sn-glycero-3-phosphocholine + a fatty acid + H(+). Snake venom phospholipase A2 (PLA2) that has enzymatic activity but is non-toxic. Displays low binding affinity and enzymatic activity on phosphatidylserine-containing vesicles and HEK-293 plasma membranes, in contrast to ammodytoxins that have high activity on these phospholipids. PLA2 catalyzes the calcium-dependent hydrolysis of the 2-acyl groups in 3-sn-phosphoglycerides. This Vipera ammodytes ammodytes (Western sand viper) protein is Neutral phospholipase A2 ammodytin I2.